An 861-amino-acid chain; its full sequence is 1,4-alpha-glucan-branching enzyme (861 aa).

(1,4-alpha-D-glucosyl)n is bound by residues tryptophan 173 and lysine 208. Aspartate 429 (nucleophile) is an active-site residue. Glutamate 484 acts as the Proton donor in catalysis.

The protein belongs to the glycosyl hydrolase 13 family. GlgB subfamily. Monomer.

The protein localises to the plastid. It is found in the chloroplast. The protein resides in the amyloplast. The enzyme catalyses Transfers a segment of a (1-&gt;4)-alpha-D-glucan chain to a primary hydroxy group in a similar glucan chain.. It participates in glycan biosynthesis; starch biosynthesis. Functionally, catalyzes the formation of the alpha-1,6-glucosidic linkages in starch by scission of a 1,4-alpha-linked oligosaccharide from growing alpha-1,4-glucan chains and the subsequent attachment of the oligosaccharide to the alpha-1,6 position. This chain is 1,4-alpha-glucan-branching enzyme (SBE1), found in Solanum tuberosum (Potato).